The primary structure comprises 350 residues: UDP-3-O-acylglucosamine N-acyltransferase (350 aa).

Histidine 251 (proton acceptor) is an active-site residue.

This sequence belongs to the transferase hexapeptide repeat family. LpxD subfamily. In terms of assembly, homotrimer.

It carries out the reaction a UDP-3-O-[(3R)-3-hydroxyacyl]-alpha-D-glucosamine + a (3R)-hydroxyacyl-[ACP] = a UDP-2-N,3-O-bis[(3R)-3-hydroxyacyl]-alpha-D-glucosamine + holo-[ACP] + H(+). Its pathway is bacterial outer membrane biogenesis; LPS lipid A biosynthesis. Catalyzes the N-acylation of UDP-3-O-acylglucosamine using 3-hydroxyacyl-ACP as the acyl donor. Is involved in the biosynthesis of lipid A, a phosphorylated glycolipid that anchors the lipopolysaccharide to the outer membrane of the cell. The protein is UDP-3-O-acylglucosamine N-acyltransferase of Prochlorococcus marinus (strain NATL2A).